The following is a 185-amino-acid chain: MGMSAAQSHPNIITTTADWLFSWARRSSLWWLQFGLACCAIEMISSAMPRFDLAERFGMLYRASPRQADLMIVAGTVTKKMAPVVRQLYDQMADPKWVISMGSCANVGGPFDTYAVVQGVDQVIPVDIYVPGCPPVPEALYYGVLELQNRIIRYERLKERYGPEAAEAYREEERQAARSALGPRS.

Residues Cys-38, Cys-39, Cys-104, and Cys-133 each coordinate [4Fe-4S] cluster. Residues 165–176 (AAEAYREEERQA) are compositionally biased toward basic and acidic residues. The disordered stretch occupies residues 165-185 (AAEAYREEERQAARSALGPRS).

This sequence belongs to the complex I 20 kDa subunit family. In terms of assembly, NDH-1 is composed of 14 different subunits. Subunits NuoB, C, D, E, F, and G constitute the peripheral sector of the complex. Requires [4Fe-4S] cluster as cofactor.

The protein localises to the cell membrane. The enzyme catalyses a quinone + NADH + 5 H(+)(in) = a quinol + NAD(+) + 4 H(+)(out). In terms of biological role, NDH-1 shuttles electrons from NADH, via FMN and iron-sulfur (Fe-S) centers, to quinones in the respiratory chain. The immediate electron acceptor for the enzyme in this species is believed to be ubiquinone. Couples the redox reaction to proton translocation (for every two electrons transferred, four hydrogen ions are translocated across the cytoplasmic membrane), and thus conserves the redox energy in a proton gradient. The protein is NADH-quinone oxidoreductase subunit B of Thermomicrobium roseum (strain ATCC 27502 / DSM 5159 / P-2).